Consider the following 111-residue polypeptide: uncharacterized protein (111 aa).

This is an uncharacterized protein from Enterococcus faecalis (strain ATCC 700802 / V583).